The sequence spans 90 residues: DNA-directed RNA polymerase subunit omega (90 aa).

Residues 69–90 form a disordered region; that stretch reads RQEQQEQEAAELAAVSSIAHTR.

The protein belongs to the RNA polymerase subunit omega family. In terms of assembly, the RNAP catalytic core consists of 2 alpha, 1 beta, 1 beta' and 1 omega subunit. When a sigma factor is associated with the core the holoenzyme is formed, which can initiate transcription.

The catalysed reaction is RNA(n) + a ribonucleoside 5'-triphosphate = RNA(n+1) + diphosphate. Promotes RNA polymerase assembly. Latches the N- and C-terminal regions of the beta' subunit thereby facilitating its interaction with the beta and alpha subunits. This Vibrio atlanticus (strain LGP32) (Vibrio splendidus (strain Mel32)) protein is DNA-directed RNA polymerase subunit omega.